The primary structure comprises 277 residues: Large ribosomal subunit protein uL2 (277 aa).

2 disordered regions span residues methionine 1–aspartate 20 and glycine 210–lysine 277. Residues glycine 210–glutamine 221 show a composition bias toward basic residues.

Belongs to the universal ribosomal protein uL2 family. Part of the 50S ribosomal subunit. Forms a bridge to the 30S subunit in the 70S ribosome.

Its function is as follows. One of the primary rRNA binding proteins. Required for association of the 30S and 50S subunits to form the 70S ribosome, for tRNA binding and peptide bond formation. It has been suggested to have peptidyltransferase activity; this is somewhat controversial. Makes several contacts with the 16S rRNA in the 70S ribosome. In Deinococcus deserti (strain DSM 17065 / CIP 109153 / LMG 22923 / VCD115), this protein is Large ribosomal subunit protein uL2.